Here is a 205-residue protein sequence, read N- to C-terminus: Ribosome maturation factor RimP (205 aa).

The protein belongs to the RimP family.

The protein resides in the cytoplasm. Functionally, required for maturation of 30S ribosomal subunits. The chain is Ribosome maturation factor RimP from Sinorhizobium fredii (strain NBRC 101917 / NGR234).